The primary structure comprises 134 residues: Small ribosomal subunit protein uS8c (134 aa).

Belongs to the universal ribosomal protein uS8 family. As to quaternary structure, part of the 30S ribosomal subunit.

It is found in the plastid. The protein localises to the chloroplast. Functionally, one of the primary rRNA binding proteins, it binds directly to 16S rRNA central domain where it helps coordinate assembly of the platform of the 30S subunit. The protein is Small ribosomal subunit protein uS8c (rps8) of Vitis vinifera (Grape).